The chain runs to 375 residues: Succinyl-diaminopimelate desuccinylase (375 aa).

Zn(2+) is bound at residue His66. Asp68 is a catalytic residue. Asp99 is a binding site for Zn(2+). Glu133 functions as the Proton acceptor in the catalytic mechanism. 3 residues coordinate Zn(2+): Glu134, Glu162, and His348.

Belongs to the peptidase M20A family. DapE subfamily. As to quaternary structure, homodimer. The cofactor is Zn(2+). It depends on Co(2+) as a cofactor.

The enzyme catalyses N-succinyl-(2S,6S)-2,6-diaminopimelate + H2O = (2S,6S)-2,6-diaminopimelate + succinate. Its pathway is amino-acid biosynthesis; L-lysine biosynthesis via DAP pathway; LL-2,6-diaminopimelate from (S)-tetrahydrodipicolinate (succinylase route): step 3/3. Catalyzes the hydrolysis of N-succinyl-L,L-diaminopimelic acid (SDAP), forming succinate and LL-2,6-diaminopimelate (DAP), an intermediate involved in the bacterial biosynthesis of lysine and meso-diaminopimelic acid, an essential component of bacterial cell walls. In Salmonella choleraesuis (strain SC-B67), this protein is Succinyl-diaminopimelate desuccinylase.